The sequence spans 149 residues: Large ribosomal subunit protein uL15 (149 aa).

Composition is skewed to basic residues over residues 1–14 (MPTH…HRGH) and 21–30 (RVGKHRKHPG). The disordered stretch occupies residues 1 to 42 (MPTHLSKTRKHRGHVSAGHGRVGKHRKHPGGRGLAGGQHHHR).

The protein belongs to the universal ribosomal protein uL15 family.

The sequence is that of Large ribosomal subunit protein uL15 from Blumeria hordei (Barley powdery mildew).